The sequence spans 282 residues: Ribosomal RNA small subunit methyltransferase I (282 aa).

This sequence belongs to the methyltransferase superfamily. RsmI family.

It localises to the cytoplasm. It carries out the reaction cytidine(1402) in 16S rRNA + S-adenosyl-L-methionine = 2'-O-methylcytidine(1402) in 16S rRNA + S-adenosyl-L-homocysteine + H(+). In terms of biological role, catalyzes the 2'-O-methylation of the ribose of cytidine 1402 (C1402) in 16S rRNA. The polypeptide is Ribosomal RNA small subunit methyltransferase I (Pseudomonas aeruginosa (strain ATCC 15692 / DSM 22644 / CIP 104116 / JCM 14847 / LMG 12228 / 1C / PRS 101 / PAO1)).